Reading from the N-terminus, the 435-residue chain is ATP-dependent protease ATPase subunit HslU (435 aa).

Residues Ile-18, 60 to 65, Asp-248, Glu-313, and Arg-385 contribute to the ATP site; that span reads GVGKTE.

It belongs to the ClpX chaperone family. HslU subfamily. A double ring-shaped homohexamer of HslV is capped on each side by a ring-shaped HslU homohexamer. The assembly of the HslU/HslV complex is dependent on binding of ATP.

The protein resides in the cytoplasm. Its function is as follows. ATPase subunit of a proteasome-like degradation complex; this subunit has chaperone activity. The binding of ATP and its subsequent hydrolysis by HslU are essential for unfolding of protein substrates subsequently hydrolyzed by HslV. HslU recognizes the N-terminal part of its protein substrates and unfolds these before they are guided to HslV for hydrolysis. In Sinorhizobium medicae (strain WSM419) (Ensifer medicae), this protein is ATP-dependent protease ATPase subunit HslU.